Consider the following 1875-residue polypeptide: Soluble starch synthase 3a, chloroplastic/amyloplastic (1875 aa).

Residues 1–49 (MEMALRPQSLLCPRSRLKVVIRPASSASGGGLAQYFLMTRRYTGSRIVR) constitute a chloroplast transit peptide. A coiled-coil region spans residues 1007-1065 (KRELERVATEEAERRRHAEEQQRMGEQRAAEQAAREQAKKEIELKKNKLQNLLSSARTH). The tract at residues 1014 to 1043 (ATEEAERRRHAEEQQRMGEQRAAEQAAREQ) is disordered.

The protein belongs to the glycosyltransferase 1 family. Bacterial/plant glycogen synthase subfamily. In terms of tissue distribution, expressed in the endosperm.

It is found in the plastid. Its subcellular location is the chloroplast. The protein resides in the amyloplast. It catalyses the reaction [(1-&gt;4)-alpha-D-glucosyl](n) + ADP-alpha-D-glucose = [(1-&gt;4)-alpha-D-glucosyl](n+1) + ADP + H(+). Its pathway is glycan biosynthesis; starch biosynthesis. Functionally, involved in starch synthesis in endosperm amyloplasts. Plays an important role in the elongation of amylopectin B chains. This is Soluble starch synthase 3a, chloroplastic/amyloplastic from Oryza sativa subsp. japonica (Rice).